A 459-amino-acid chain; its full sequence is Argininosuccinate lyase (459 aa).

It belongs to the lyase 1 family. Argininosuccinate lyase subfamily.

It is found in the cytoplasm. It catalyses the reaction 2-(N(omega)-L-arginino)succinate = fumarate + L-arginine. It functions in the pathway amino-acid biosynthesis; L-arginine biosynthesis; L-arginine from L-ornithine and carbamoyl phosphate: step 3/3. This is Argininosuccinate lyase from Photorhabdus laumondii subsp. laumondii (strain DSM 15139 / CIP 105565 / TT01) (Photorhabdus luminescens subsp. laumondii).